The primary structure comprises 183 residues: Neuronal synaptobrevin (183 aa).

Residues 1 to 17 show a composition bias toward low complexity; the sequence is MADAAPAGDAPPNAGAP. A disordered region spans residues 1–32; sequence MADAAPAGDAPPNAGAPAGEGGDGEIVGGPHN. Residues 1 to 106 are Cytoplasmic-facing; sequence MADAAPAGDA…KFWLQNLKMM (106 aa). Over residues 18-27 the composition is skewed to gly residues; that stretch reads AGEGGDGEIV. The region spanning 41 to 101 is the v-SNARE coiled-coil homology domain; that stretch reads RLQQTQAQVD…GKLKRKFWLQ (61 aa). Residues 107-127 traverse the membrane as a helical segment; it reads IIMGVIGLVVVGIIANKLGLI. Residues 128 to 183 lie on the Vesicular side of the membrane; sequence GGEQPPQYQYPPQYMQPPPPPPQQPAGGQSSLVDAAGAGDGAGAGGSAGAGDHGGV. Residues 135–183 are disordered; that stretch reads YQYPPQYMQPPPPPPQQPAGGQSSLVDAAGAGDGAGAGGSAGAGDHGGV. Over residues 141 to 151 the composition is skewed to pro residues; it reads YMQPPPPPPQQ. A compositionally biased stretch (gly residues) spans 165–183; it reads AGDGAGAGGSAGAGDHGGV.

The protein belongs to the synaptobrevin family. In terms of assembly, part of the SNARE core complex containing Snap25 and syntaxin. As to expression, specifically expressed in neurons and synapses.

It localises to the cytoplasmic vesicle. Its subcellular location is the secretory vesicle. It is found in the synaptic vesicle membrane. The protein localises to the early endosome membrane. In terms of biological role, involved in the targeting and/or fusion of transport vesicles to their target membrane. Major SNARE protein of synaptic vesicles which mediates fusion of synaptic vesicles to release neurotransmitters. Essential for fast vesicular exocytosis and activity-dependent neurotransmitter release as well as fast endocytosis that mediates rapid reuse of synaptic vesicles. Also involved in a neuron-specific sort-and-degrade mechanism that promotes endolysosomal degradation and is required for neuronal maintenance. In Drosophila melanogaster (Fruit fly), this protein is Neuronal synaptobrevin.